The chain runs to 351 residues: UDP-3-O-acylglucosamine N-acyltransferase (351 aa).

Residue His240 is the Proton acceptor of the active site.

Belongs to the transferase hexapeptide repeat family. LpxD subfamily. As to quaternary structure, homotrimer.

It carries out the reaction a UDP-3-O-[(3R)-3-hydroxyacyl]-alpha-D-glucosamine + a (3R)-hydroxyacyl-[ACP] = a UDP-2-N,3-O-bis[(3R)-3-hydroxyacyl]-alpha-D-glucosamine + holo-[ACP] + H(+). It functions in the pathway bacterial outer membrane biogenesis; LPS lipid A biosynthesis. In terms of biological role, catalyzes the N-acylation of UDP-3-O-acylglucosamine using 3-hydroxyacyl-ACP as the acyl donor. Is involved in the biosynthesis of lipid A, a phosphorylated glycolipid that anchors the lipopolysaccharide to the outer membrane of the cell. This is UDP-3-O-acylglucosamine N-acyltransferase from Pseudomonas putida (strain ATCC 47054 / DSM 6125 / CFBP 8728 / NCIMB 11950 / KT2440).